Consider the following 33-residue polypeptide: Natriuretic peptide NP2 (33 aa).

A disulfide bridge links Cys-10 with Cys-26.

As to expression, expressed by the venom gland.

Its subcellular location is the secreted. Functionally, snake venom natriuretic peptide that shows an increase in perfusion pressure, urinary flow and glomerular filtration rate. Reduces total and proximal tubular transport of sodium. In the aortic ring assay, causes a relaxant effect in endothelium-intact thoracic aortic rings precontracted with phenylephrine in the presence and absence of isatin, a natriuretic receptor antagonist. This Crotalus durissus cascavella (Northeastern Brazilian rattlesnake) protein is Natriuretic peptide NP2.